The primary structure comprises 338 residues: Solute carrier family 35 member G4 (338 aa).

The disordered stretch occupies residues 1–29; the sequence is MAGSHPYFNLPDSTHPSPPSTPPSLHWHQ. The next 7 helical transmembrane spans lie at 37 to 57, 160 to 180, 190 to 210, 221 to 241, 250 to 270, 281 to 301, and 305 to 325; these read TNGL…VGPL, CGLL…LWTL, GLGY…LLVY, TVAF…LFVL, LLSW…FTCV, LVCA…YFML, and VAPS…IITA. In terms of domain architecture, EamA 1 spans 49-174; sequence LPAGFVGPLS…SILGLIIIVG (126 aa). The EamA 2 domain maps to 272–325; that stretch reads YAVTKAHPALVCAVLHSEVVMALILQYFMLHETVAPSDIMGAGVVLGSIAIITA.

The protein belongs to the SLC35G solute transporter family.

It is found in the membrane. The chain is Solute carrier family 35 member G4 (SLC35G4) from Homo sapiens (Human).